A 565-amino-acid polypeptide reads, in one-letter code: Bicyclogermacrene synthase (565 aa).

Mg(2+) is bound by residues D317, D321, D461, and E469. Residues 317 to 321 carry the DDXXD motif motif; sequence DDTFD.

The protein belongs to the terpene synthase family. Mg(2+) is required as a cofactor.

The catalysed reaction is (2E,6E)-farnesyl diphosphate = bicyclogermacrene + diphosphate. The protein operates within secondary metabolite biosynthesis; terpenoid biosynthesis. In terms of biological role, sesquiterpene synthase converting farnesyl diphosphate to bicyclogermacrene as the major product. The sequence is that of Bicyclogermacrene synthase from Phyla dulcis (Aztec sweet herb).